Consider the following 779-residue polypeptide: Subtilisin-like protease SBT3.18 (779 aa).

Positions M1–G21 are cleaved as a signal peptide. Positions D22 to H109 are cleaved as a propeptide — activation peptide. The Inhibitor I9 domain occupies V30–H109. A glycan (N-linked (GlcNAc...) asparagine) is linked at N84. The 509-residue stretch at S113–M621 folds into the Peptidase S8 domain. Catalysis depends on charge relay system residues D144 and H221. N236 and N406 each carry an N-linked (GlcNAc...) asparagine glycan. The active-site Charge relay system is the S553.

Belongs to the peptidase S8 family.

The protein resides in the secreted. In Arabidopsis thaliana (Mouse-ear cress), this protein is Subtilisin-like protease SBT3.18.